The chain runs to 552 residues: CTP synthase (552 aa).

The tract at residues 1–267 is amidoligase domain; sequence MSKFVFVTGG…AHQTLELLRM (267 aa). A CTP-binding site is contributed by serine 13. UTP is bound at residue serine 13. Residues 14-19 and aspartate 71 contribute to the ATP site; that span reads SIGKGI. Residues aspartate 71 and glutamate 141 each contribute to the Mg(2+) site. CTP contacts are provided by residues 148–150, 188–193, and lysine 224; these read DIE and KTKPTQ. UTP is bound by residues 188-193 and lysine 224; that span reads KTKPTQ. Residues 292-534 enclose the Glutamine amidotransferase type-1 domain; that stretch reads TVALVGKYVQ…INAVLKRRNA (243 aa). Glycine 354 provides a ligand contact to L-glutamine. Cysteine 381 serves as the catalytic Nucleophile; for glutamine hydrolysis. Residues 382–385, glutamate 405, and arginine 462 contribute to the L-glutamine site; that span reads LGMQ. Residues histidine 507 and glutamate 509 contribute to the active site.

The protein belongs to the CTP synthase family. In terms of assembly, homotetramer.

It carries out the reaction UTP + L-glutamine + ATP + H2O = CTP + L-glutamate + ADP + phosphate + 2 H(+). The enzyme catalyses L-glutamine + H2O = L-glutamate + NH4(+). It catalyses the reaction UTP + NH4(+) + ATP = CTP + ADP + phosphate + 2 H(+). It functions in the pathway pyrimidine metabolism; CTP biosynthesis via de novo pathway; CTP from UDP: step 2/2. Allosterically activated by GTP, when glutamine is the substrate; GTP has no effect on the reaction when ammonia is the substrate. The allosteric effector GTP functions by stabilizing the protein conformation that binds the tetrahedral intermediate(s) formed during glutamine hydrolysis. Inhibited by the product CTP, via allosteric rather than competitive inhibition. Functionally, catalyzes the ATP-dependent amination of UTP to CTP with either L-glutamine or ammonia as the source of nitrogen. Regulates intracellular CTP levels through interactions with the four ribonucleotide triphosphates. This Synechocystis sp. (strain ATCC 27184 / PCC 6803 / Kazusa) protein is CTP synthase.